The sequence spans 507 residues: Microcystinase C (507 aa).

Residues 1-21 (MLDRRTLMGGILSMAGSKATG) form the signal peptide. Residues aspartate 167, histidine 169, and histidine 191 each contribute to the Zn(2+) site.

The protein belongs to the peptidase M81 family. Zn(2+) is required as a cofactor.

Its activity is regulated as follows. Inhibited by the metal chelators EDTA and 1,10-phenanthroline. Its function is as follows. Involved in peptidolytic degradation of cyclic heptapeptide hepatotoxin microcystin (MC). Cleaves both linear MC and the tetrapeptide degradation product of MC. Cleaves the Adda-Glu peptide bond of linear MC heptapeptides. The polypeptide is Microcystinase C (Sphingomonas sp).